The chain runs to 751 residues: Lanosterol synthase erg7A (751 aa).

The segment at 1–22 (MTGGPIASWRTAAQGHLTPDEN) is disordered. The stretch at 147-189 (ATEIKRYLFARQHPEDGGWGLHIEAHSSVFGTCMNYVALRLIG) is one PFTB 1 repeat. Asp-481 functions as the Proton donor in the catalytic mechanism. PFTB repeat units follow at residues 508–553 (LKDS…MIGY), 585–625 (KDKA…ASVG), and 634–675 (ARRG…VQTA).

Belongs to the terpene cyclase/mutase family.

It localises to the lipid droplet. The protein localises to the endoplasmic reticulum membrane. It catalyses the reaction (S)-2,3-epoxysqualene = lanosterol. It participates in steroid metabolism; ergosterol biosynthesis. Functionally, lanosterol synthase; part of the third module of ergosterol biosynthesis pathway that includes the late steps of the pathway. ERG7A and ERG7B catalyze the cyclization of (S)-2,3 oxidosqualene to lanosterol, a reaction that forms the sterol core. The third module or late pathway involves the ergosterol synthesis itself through consecutive reactions that mainly occur in the endoplasmic reticulum (ER) membrane. Firstly, the squalene synthase erg9 catalyzes the condensation of 2 farnesyl pyrophosphate moieties to form squalene, which is the precursor of all steroids. Squalene synthase is crucial for balancing the incorporation of farnesyl diphosphate (FPP) into sterol and nonsterol isoprene synthesis. Secondly, squalene is converted into lanosterol by the consecutive action of the squalene epoxidase erg1 and the lanosterol synthase erg7. Then, the delta(24)-sterol C-methyltransferase erg6 methylates lanosterol at C-24 to produce eburicol. Eburicol is the substrate of the sterol 14-alpha demethylase encoded by cyp51A and cyp51B, to yield 4,4,24-trimethyl ergosta-8,14,24(28)-trienol. The C-14 reductase erg24 then reduces the C14=C15 double bond which leads to 4,4-dimethylfecosterol. A sequence of further demethylations at C-4, involving the C-4 demethylation complex containing the C-4 methylsterol oxidases erg25A or erg25B, the sterol-4-alpha-carboxylate 3-dehydrogenase erg26 and the 3-keto-steroid reductase erg27, leads to the production of fecosterol via 4-methylfecosterol. The C-8 sterol isomerase erg2 then catalyzes the reaction which results in unsaturation at C-7 in the B ring of sterols and thus converts fecosterol to episterol. The sterol-C5-desaturase erg3B then catalyzes the introduction of a C-5 double bond in the B ring to produce 5-dehydroepisterol. The 2 other sterol-C5-desaturases, erg3A and erg3C, seem to be less important in ergosterol biosynthesis. The C-22 sterol desaturase erg5 further converts 5-dehydroepisterol into ergosta-5,7,22,24(28)-tetraen-3beta-ol by forming the C-22(23) double bond in the sterol side chain. Finally, ergosta-5,7,22,24(28)-tetraen-3beta-ol is substrate of the C-24(28) sterol reductases erg4A and erg4B to produce ergosterol. Possible alternative sterol biosynthetic pathways might exist from fecosterol to ergosterol, depending on the activities of the erg3 isoforms. The polypeptide is Lanosterol synthase erg7A (Aspergillus fumigatus (strain ATCC MYA-4609 / CBS 101355 / FGSC A1100 / Af293) (Neosartorya fumigata)).